The sequence spans 121 residues: Putative iron-sulfur cluster insertion protein ErpA (121 aa).

Iron-sulfur cluster is bound by residues Cys49, Cys113, and Cys115.

Belongs to the HesB/IscA family. Homodimer. Iron-sulfur cluster is required as a cofactor.

Its function is as follows. Required for insertion of 4Fe-4S clusters. The sequence is that of Putative iron-sulfur cluster insertion protein ErpA from Polaromonas sp. (strain JS666 / ATCC BAA-500).